The following is a 227-amino-acid chain: Cytochrome c oxidase subunit 2 (227 aa).

At 1-14 the chain is on the mitochondrial intermembrane side; sequence MAYPLQLGLQDASS. The helical transmembrane segment at 15–45 threads the bilayer; sequence PIMEELMNFHDHTLMIVFLISSLVLYLISLM. Residues 46 to 59 lie on the Mitochondrial matrix side of the membrane; that stretch reads LTTKLIHTSTMDAQ. Residues 60–87 form a helical membrane-spanning segment; it reads EVETVWTILPAIILILIALPSLRILYMM. Over 88–227 the chain is Mitochondrial intermembrane; sequence DEINNPVLTV…LFENWSLSLT (140 aa). Cu cation contacts are provided by histidine 161, cysteine 196, glutamate 198, cysteine 200, histidine 204, and methionine 207. Glutamate 198 contacts Mg(2+).

The protein belongs to the cytochrome c oxidase subunit 2 family. Component of the cytochrome c oxidase (complex IV, CIV), a multisubunit enzyme composed of 14 subunits. The complex is composed of a catalytic core of 3 subunits MT-CO1, MT-CO2 and MT-CO3, encoded in the mitochondrial DNA, and 11 supernumerary subunits COX4I, COX5A, COX5B, COX6A, COX6B, COX6C, COX7A, COX7B, COX7C, COX8 and NDUFA4, which are encoded in the nuclear genome. The complex exists as a monomer or a dimer and forms supercomplexes (SCs) in the inner mitochondrial membrane with NADH-ubiquinone oxidoreductase (complex I, CI) and ubiquinol-cytochrome c oxidoreductase (cytochrome b-c1 complex, complex III, CIII), resulting in different assemblies (supercomplex SCI(1)III(2)IV(1) and megacomplex MCI(2)III(2)IV(2)). Found in a complex with TMEM177, COA6, COX18, COX20, SCO1 and SCO2. Interacts with TMEM177 in a COX20-dependent manner. Interacts with COX20. Interacts with COX16. Cu cation is required as a cofactor.

It is found in the mitochondrion inner membrane. It carries out the reaction 4 Fe(II)-[cytochrome c] + O2 + 8 H(+)(in) = 4 Fe(III)-[cytochrome c] + 2 H2O + 4 H(+)(out). Functionally, component of the cytochrome c oxidase, the last enzyme in the mitochondrial electron transport chain which drives oxidative phosphorylation. The respiratory chain contains 3 multisubunit complexes succinate dehydrogenase (complex II, CII), ubiquinol-cytochrome c oxidoreductase (cytochrome b-c1 complex, complex III, CIII) and cytochrome c oxidase (complex IV, CIV), that cooperate to transfer electrons derived from NADH and succinate to molecular oxygen, creating an electrochemical gradient over the inner membrane that drives transmembrane transport and the ATP synthase. Cytochrome c oxidase is the component of the respiratory chain that catalyzes the reduction of oxygen to water. Electrons originating from reduced cytochrome c in the intermembrane space (IMS) are transferred via the dinuclear copper A center (CU(A)) of subunit 2 and heme A of subunit 1 to the active site in subunit 1, a binuclear center (BNC) formed by heme A3 and copper B (CU(B)). The BNC reduces molecular oxygen to 2 water molecules using 4 electrons from cytochrome c in the IMS and 4 protons from the mitochondrial matrix. The sequence is that of Cytochrome c oxidase subunit 2 (MT-CO2) from Taterillus emini (Emin's gerbil).